A 302-amino-acid chain; its full sequence is uncharacterized protein (302 aa).

Belongs to the HAD-like hydrolase superfamily.

The protein localises to the cytoplasm. It is found in the nucleus. This is an uncharacterized protein from Schizosaccharomyces pombe (strain 972 / ATCC 24843) (Fission yeast).